The following is a 66-amino-acid chain: Large ribosomal subunit protein uL29 (66 aa).

This sequence belongs to the universal ribosomal protein uL29 family.

This is Large ribosomal subunit protein uL29 from Bacillus mycoides (strain KBAB4) (Bacillus weihenstephanensis).